Reading from the N-terminus, the 317-residue chain is Glutathione synthetase (317 aa).

Residues 126–311 (KFFATQFTQC…IGDKLMDAIA (186 aa)) enclose the ATP-grasp domain. 152 to 208 (AAEHRDIILKPLDGMGGSSIFRHREGDPNLSVILETLTQHGSQQIMAQRYLPEIKDG) lines the ATP pocket. Mg(2+) is bound by residues glutamate 282 and asparagine 284.

It belongs to the prokaryotic GSH synthase family. Requires Mg(2+) as cofactor. The cofactor is Mn(2+).

The enzyme catalyses gamma-L-glutamyl-L-cysteine + glycine + ATP = glutathione + ADP + phosphate + H(+). Its pathway is sulfur metabolism; glutathione biosynthesis; glutathione from L-cysteine and L-glutamate: step 2/2. The chain is Glutathione synthetase from Pseudomonas aeruginosa (strain ATCC 15692 / DSM 22644 / CIP 104116 / JCM 14847 / LMG 12228 / 1C / PRS 101 / PAO1).